A 631-amino-acid polypeptide reads, in one-letter code: tRNA uridine 5-carboxymethylaminomethyl modification enzyme MnmG (631 aa).

Residues 15–20 (GAGHAG), Ile-127, and Ser-182 contribute to the FAD site. 276–290 (GPRYCPSIEDKIVRF) provides a ligand contact to NAD(+). An FAD-binding site is contributed by Gln-373.

This sequence belongs to the MnmG family. As to quaternary structure, homodimer. Heterotetramer of two MnmE and two MnmG subunits. It depends on FAD as a cofactor.

It is found in the cytoplasm. NAD-binding protein involved in the addition of a carboxymethylaminomethyl (cmnm) group at the wobble position (U34) of certain tRNAs, forming tRNA-cmnm(5)s(2)U34. The protein is tRNA uridine 5-carboxymethylaminomethyl modification enzyme MnmG of Streptococcus mutans serotype c (strain ATCC 700610 / UA159).